Consider the following 570-residue polypeptide: Dihydroxy-acid dehydratase (570 aa).

Cys-61 contacts [2Fe-2S] cluster. Residue Asp-94 coordinates Mg(2+). Cys-135 is a binding site for [2Fe-2S] cluster. The Mg(2+) site is built by Asp-136 and Lys-137. Lys-137 is subject to N6-carboxylysine. Cys-207 is a [2Fe-2S] cluster binding site. Residue Glu-459 participates in Mg(2+) binding. Catalysis depends on Ser-485, which acts as the Proton acceptor.

It belongs to the IlvD/Edd family. As to quaternary structure, homodimer. [2Fe-2S] cluster is required as a cofactor. Requires Mg(2+) as cofactor.

It catalyses the reaction (2R)-2,3-dihydroxy-3-methylbutanoate = 3-methyl-2-oxobutanoate + H2O. The enzyme catalyses (2R,3R)-2,3-dihydroxy-3-methylpentanoate = (S)-3-methyl-2-oxopentanoate + H2O. The protein operates within amino-acid biosynthesis; L-isoleucine biosynthesis; L-isoleucine from 2-oxobutanoate: step 3/4. Its pathway is amino-acid biosynthesis; L-valine biosynthesis; L-valine from pyruvate: step 3/4. In terms of biological role, functions in the biosynthesis of branched-chain amino acids. Catalyzes the dehydration of (2R,3R)-2,3-dihydroxy-3-methylpentanoate (2,3-dihydroxy-3-methylvalerate) into 2-oxo-3-methylpentanoate (2-oxo-3-methylvalerate) and of (2R)-2,3-dihydroxy-3-methylbutanoate (2,3-dihydroxyisovalerate) into 2-oxo-3-methylbutanoate (2-oxoisovalerate), the penultimate precursor to L-isoleucine and L-valine, respectively. In Lactococcus lactis subsp. cremoris (strain SK11), this protein is Dihydroxy-acid dehydratase.